The chain runs to 689 residues: Ribonuclease J (689 aa).

A disordered region spans residues 1 to 88 (MTDNNQNNEN…RNYAQEELDS (88 aa)). The span at 9-24 (ENHENSSENSKADEMR) shows a compositional bias: basic and acidic residues. Over residues 56-78 (HHKKEHRPNKKPNNHHKQKHAKT) the composition is skewed to basic residues. 2 positions are modified to N6-acetyllysine: lysine 132 and lysine 138. Zn(2+)-binding residues include histidine 206, histidine 208, aspartate 210, histidine 211, histidine 275, and aspartate 297. N6-acetyllysine is present on residues lysine 321, lysine 335, and lysine 395. 498-502 (HVSGH) provides a ligand contact to substrate. Position 509 is an N6-acetyllysine (lysine 509). Histidine 524 is a binding site for Zn(2+). 3 positions are modified to N6-acetyllysine: lysine 545, lysine 632, and lysine 647.

Belongs to the metallo-beta-lactamase superfamily. RNA-metabolizing metallo-beta-lactamase-like family. Bacterial RNase J subfamily. In terms of assembly, homodimer. Homotetramer; dimer of homodimers. Interacts with RNA helicase RhpA, might be a member of a minimal RNA degradosome complex. Zn(2+) serves as cofactor. In terms of processing, acetylated on nine lysine residues. Some of the residues are acetylated by multiple different mechanisms. RimL is partially responsible for the acetylation of Lys-321, Lys-395 and Lys-647. HPB8_1270 homolog is partially responsible for the acetylation of Lys-321, Lys-395, Lys-509 and Lys-647. Acetyl-phosphate-mediated non-enzymatic acetylation pathway takes part in the acetylation of Lys-132, Lys-321, Lys-395, Lys-509 and Lys-647. Acetylation of the remaining residues Lys-138, Lys-335, Lys-545 and Lys-632 occurs by a yet undetermined mechanism. Acetylation on a number of these residues is important for growth regulation and proper cell morphology.

The protein localises to the cytoplasm. Its activity is regulated as follows. Catalytic activity is regulated by the balance between homodimers and homotetramers, with homotetramers being the active forms of this enzyme. Acetylation allosterically regulates the homooligomerization state and hence the catalytic activity. Functionally, an RNase that has 5'-3' exoribonuclease and endoribonuclease activity. Degrades 5'-monophosphorylated ssRNA and dsRNA, considerably more active on ssRNA. Association with RhpA significantly increases the dsRNase activity. Degrades RNA substrate with hairpin structures at both ends with low activity, but presence of RhpA significantly increases the activity on this substrate. Stimulates ATPase activity of RNA helicase RhpA. Involved in stabilization of mRNA but apparently not rRNA. The polypeptide is Ribonuclease J (Helicobacter pylori (strain ATCC 700392 / 26695) (Campylobacter pylori)).